We begin with the raw amino-acid sequence, 213 residues long: Uracil phosphoribosyltransferase (213 aa).

5-phospho-alpha-D-ribose 1-diphosphate contacts are provided by residues arginine 78, arginine 103, and aspartate 131–threonine 139. Residues isoleucine 197 and glycine 202–alanine 204 contribute to the uracil site. Residue aspartate 203 participates in 5-phospho-alpha-D-ribose 1-diphosphate binding.

This sequence belongs to the UPRTase family. Requires Mg(2+) as cofactor.

The enzyme catalyses UMP + diphosphate = 5-phospho-alpha-D-ribose 1-diphosphate + uracil. It functions in the pathway pyrimidine metabolism; UMP biosynthesis via salvage pathway; UMP from uracil: step 1/1. Allosterically activated by GTP. Its function is as follows. Catalyzes the conversion of uracil and 5-phospho-alpha-D-ribose 1-diphosphate (PRPP) to UMP and diphosphate. This chain is Uracil phosphoribosyltransferase, found in Bifidobacterium longum subsp. infantis (strain ATCC 15697 / DSM 20088 / JCM 1222 / NCTC 11817 / S12).